Consider the following 1239-residue polypeptide: Erythroid differentiation-related factor 1 (1239 aa).

Disordered regions lie at residues 1 to 39 (MGDP…QGSA), 219 to 269 (AQPV…REPL), 517 to 559 (PKKE…DPAD), and 620 to 646 (KKES…TRGG). Low complexity-rich tracts occupy residues 9–28 (AEAS…LSQA) and 253–263 (SSVSEDPSASS). The span at 530–547 (NSDESYSEEEEEMADSDE) shows a compositional bias: acidic residues. TPR repeat units follow at residues 693–726 (SKAY…HDTY) and 914–953 (AQAH…LGTR).

The protein resides in the nucleus. Functionally, transcription factor involved in erythroid differentiation. Involved in transcriptional activation of the globin gene. The sequence is that of Erythroid differentiation-related factor 1 (Edrf1) from Mus musculus (Mouse).